Consider the following 520-residue polypeptide: 2-isopropylmalate synthase (520 aa).

The Pyruvate carboxyltransferase domain occupies 5 to 268 (VYIFDTTLRD…YTDVNTKEIY (264 aa)). The Mn(2+) site is built by D14, H202, H204, and N238. The regulatory domain stretch occupies residues 394–520 (KVLHFQVQSG…RQEIREEGTV (127 aa)).

This sequence belongs to the alpha-IPM synthase/homocitrate synthase family. LeuA type 1 subfamily. Homodimer. Requires Mn(2+) as cofactor.

The protein localises to the cytoplasm. It carries out the reaction 3-methyl-2-oxobutanoate + acetyl-CoA + H2O = (2S)-2-isopropylmalate + CoA + H(+). The protein operates within amino-acid biosynthesis; L-leucine biosynthesis; L-leucine from 3-methyl-2-oxobutanoate: step 1/4. Catalyzes the condensation of the acetyl group of acetyl-CoA with 3-methyl-2-oxobutanoate (2-ketoisovalerate) to form 3-carboxy-3-hydroxy-4-methylpentanoate (2-isopropylmalate). This Aquifex aeolicus (strain VF5) protein is 2-isopropylmalate synthase.